The following is a 384-amino-acid chain: uncharacterized protein (384 aa).

12 consecutive transmembrane segments (helical) span residues 22 to 42 (LAFFIAGLGMAAWAPLVPFAK), 52 to 72 (LGLLLLCIGIGSMLAMPLTGV), 81 to 101 (AVILLAGAVLCLDLPLLVLMN), 106 to 126 (MAIALLVFGAAMGIIDVAMNI), 143 to 163 (FHGLFSVGGIVGAGGVSALLW), 164 to 184 (LGLNPLTAIMATVVLMIILLL), 202 to 222 (LFVFPRGWVMFIGFLCFVMFL), 240 to 260 (GMSPSQAGMGYAVFAIAMTLG), 276 to 296 (VLLGGSLCSAIGIIIAISIDS), 299 to 319 (AAIIGFMLVGFGASNVVPILF), 327 to 347 (VMPANLAVASITTIGYAGILA), and 352 to 372 (IGFIAQLSSLSVAFGCVALLL).

The protein belongs to the major facilitator superfamily.

The protein resides in the membrane. This is an uncharacterized protein from Yersinia pestis.